Consider the following 370-residue polypeptide: Dihydroorotate dehydrogenase (370 aa).

Residues K82, 135–139 (NSFGM), and N200 contribute to the substrate site. 82–83 (KT) contacts FMN. N200 lines the FMN pocket. The active-site Nucleophile is C203. Residues K241 and I269 each coordinate FMN. Residue 270–271 (NT) coordinates substrate. FMN is bound by residues G297, 328-329 (GG), and 350-351 (AT).

It belongs to the dihydroorotate dehydrogenase family. Requires FMN as cofactor.

It carries out the reaction (S)-dihydroorotate + A = orotate + AH2. It functions in the pathway pyrimidine metabolism; UMP biosynthesis via de novo pathway. In terms of biological role, catalyzes the conversion of dihydroorotate to orotate. Participates in the pyrimidine biosynthetic pathway. The chain is Dihydroorotate dehydrogenase (pyr4) from Dictyostelium discoideum (Social amoeba).